The chain runs to 312 residues: Putative HTH-type transcriptional regulatory protein Ta1363 (312 aa).

Residues 133–186 enclose the HTH cro/C1-type domain; the sequence is LREMRMKMSLSIGYLSHYLGVSRRSVSLYENGSSATIDVFLKLQEIIKSDLVDH. Residues 144 to 163 constitute a DNA-binding region (H-T-H motif); it reads IGYLSHYLGVSRRSVSLYEN.

In Thermoplasma acidophilum (strain ATCC 25905 / DSM 1728 / JCM 9062 / NBRC 15155 / AMRC-C165), this protein is Putative HTH-type transcriptional regulatory protein Ta1363.